The primary structure comprises 461 residues: Vimentin (461 aa).

Low complexity-rich tracts occupy residues 1 to 14 (MNRTTSRQTTSSSS) and 35 to 52 (SSRQYSSPVRSSRMSYSV). The interval 1–52 (MNRTTSRQTTSSSSYKRMFGGEGRPSVGMARSTLSSRQYSSPVRSSRMSYSV) is disordered. The head stretch occupies residues 1-91 (MNRTTSRQTT…FALSDAINSE (91 aa)). Positions 92–127 (FKANRTNEKAEMQHLNDRFASYIDKVRFLEQQNKIL) are coil 1A. Residues 92–127 (FKANRTNEKAEMQHLNDRFASYIDKVRFLEQQNKIL) adopt a coiled-coil conformation. Positions 99-407 (EKAEMQHLND…KLLEGEESRI (309 aa)) constitute an IF rod domain. Positions 128–149 (LAELEQLKGKGASRIGDLYEDE) are linker 1. A coiled-coil region spans residues 150-241 (MRDLRRQVDQ…KLHDEEVAEL (92 aa)). The interval 150–241 (MRDLRRQVDQ…KLHDEEVAEL (92 aa)) is coil 1B. Positions 242-264 (QAQIQDQHVQIDMDVAKPDLTAA) are linker 12. Positions 265–403 (LRDVRVQYET…ATYRKLLEGE (139 aa)) are coil 2. Residues 299–403 (NRNTDAIRQA…ATYRKLLEGE (105 aa)) are a coiled coil. Residues 404-461 (ESRITTPMPNFSSFNLRESMLEARPMIDNLSKKVVIKTIETRDGHVINESTQNHDDLE) are tail.

Belongs to the intermediate filament family. As to quaternary structure, homomer assembled from elementary dimers. In terms of processing, one of the most prominent phosphoproteins in various cells of mesenchymal origin. Phosphorylation is enhanced during cell division, at which time vimentin filaments are significantly reorganized.

The protein resides in the cytoplasm. It is found in the cytoskeleton. The protein localises to the nucleus matrix. In terms of biological role, vimentins are class-III intermediate filaments found in various non-epithelial cells, especially mesenchymal cells. Vimentin is attached to the nucleus, endoplasmic reticulum, and mitochondria, either laterally or terminally. This Oncorhynchus mykiss (Rainbow trout) protein is Vimentin (vim).